The following is a 414-amino-acid chain: Enterobactin exporter EntS (414 aa).

Over 1-21 the chain is Cytoplasmic; it reads MNRQSWLLNLSLLKTHPAFRA. The chain crosses the membrane as a helical span at residues 22-42; sequence VFLARFISIVSLGLLGVAVPV. The Periplasmic portion of the chain corresponds to 43–55; it reads QIQMMTHSTWQVG. The helical transmembrane segment at 56-76 threads the bilayer; that stretch reads LSVTLTGGAMFIGLMVGGVLA. At 77-83 the chain is on the cytoplasmic side; that stretch reads DRYERKK. The chain crosses the membrane as a helical span at residues 84-104; it reads VILLARGTCGIGFIGLCVNSL. Topologically, residues 105–109 are periplasmic; sequence LPEPS. Residues 110–130 traverse the membrane as a helical segment; that stretch reads LLAIYLLGLWDGFFASLGVTA. Over 131 to 156 the chain is Cytoplasmic; it reads LLAATPALVGRENLMQAGAITMLTVR. A helical transmembrane segment spans residues 157 to 177; that stretch reads LGSVISPMLGGILLASGGVAW. Position 178 (Asn178) is a topological domain, periplasmic. Residues 179–199 form a helical membrane-spanning segment; sequence YGLAAAGTFITLLPLLTLPRL. The Cytoplasmic segment spans residues 200-218; sequence PVPPQPRENPFIALLAAFR. A helical transmembrane segment spans residues 219-239; the sequence is FLLASPLIGGIALLGGLVTMA. Residues 240–256 are Periplasmic-facing; sequence SAVRVLYPALAMSWQMS. Residues 257 to 277 traverse the membrane as a helical segment; that stretch reads AAQIGLLYAAIPLGAAIGALT. The Cytoplasmic portion of the chain corresponds to 278–287; it reads SGQLAHSVRP. A helical transmembrane segment spans residues 288–307; it reads GLIMLVSTVGSFLAVGLFAI. Over 308–313 the chain is Periplasmic; it reads MPVWTA. The chain crosses the membrane as a helical span at residues 314 to 336; it reads GVICLALFGWLSAISSLLQYTLL. Over 337-356 the chain is Cytoplasmic; the sequence is QTQTPENMLGRMNGLWTAQN. A helical transmembrane segment spans residues 357 to 377; the sequence is VTGDAIGAALLGGLGAMMTPV. A topological domain (periplasmic) is located at residue Ala378. Residues 379-399 form a helical membrane-spanning segment; it reads SASVSGFGLVIIGLLLLLVLG. Residues 400–414 are Cytoplasmic-facing; that stretch reads ELRRFRQTPPVSDAG.

The protein belongs to the major facilitator superfamily. EntS (TC 2.A.1.38) family.

The protein localises to the cell inner membrane. In terms of biological role, component of an export pathway for enterobactin. In Salmonella choleraesuis (strain SC-B67), this protein is Enterobactin exporter EntS.